The chain runs to 398 residues: MRKVGITLSVVALVIMGFVAGCIGGTQTQGEKVKVAVLFDVGGRGDLSFNDMAYLGAERAKKELGVEVEYMTPKSREDMVPLLKQLAESKEYDLLVLIGFLWTTPLDQVADQYPDQKFALIDSTTGKVRENEVDILFREQEAAALIGVIASGMAYELGGDTIGAVAGMDIPPLWKFHIGYLYGAKYFEKKTGKPVKLLWQYTGTFTDTQVGYTTGMQLLQQGAKVLYGLAGLTHVGMFDAVIDWNKQGKGKALAIGQDASQEWYAPEYIPISGAKRVDVAVYTAIEMVVKNQWKGGIMTLGLKEGGVGYWNLDGVRQFAEFAQEGGKLKDMTPEDVVRIVKEQREKYIKPEVWEIVRELEEKIKNGEIKFKTPQSHDEYEQIIKELEKGNLDAALEKE.

The N-terminal stretch at 1-21 (MRKVGITLSVVALVIMGFVAG) is a signal peptide. Residue Cys-22 is modified to N-acetylcysteine. Cys-22 carries the S-archaeol cysteine lipid modification.

Belongs to the BMP lipoprotein family.

Its subcellular location is the cell membrane. This is an uncharacterized protein from Pyrococcus furiosus (strain ATCC 43587 / DSM 3638 / JCM 8422 / Vc1).